The following is a 76-amino-acid chain: DNA gyrase inhibitor YacG (76 aa).

Residues cysteine 7, cysteine 10, cysteine 26, and cysteine 30 each contribute to the Zn(2+) site.

Belongs to the DNA gyrase inhibitor YacG family. Interacts with GyrB. Zn(2+) is required as a cofactor.

Functionally, inhibits all the catalytic activities of DNA gyrase by preventing its interaction with DNA. Acts by binding directly to the C-terminal domain of GyrB, which probably disrupts DNA binding by the gyrase. The sequence is that of DNA gyrase inhibitor YacG from Pseudoalteromonas translucida (strain TAC 125).